The sequence spans 269 residues: DNA-binding protein RFXANK (269 aa).

The segment at M1–D36 is disordered. ANK repeat units follow at residues L88–N127, R132–I161, E165–I194, N198–T227, and S231–Q260.

Forms homodimers. The RFX heterotetrameric complex consists of 2 molecules of RFX5 and one each of RFXAP and RFX-B/RFXANK; with each subunit representing a separate complementation group. Interacts (via ankyrin repeats) with RFX5 (via PxLPxI/L motif); the interaction is direct. RFX forms cooperative DNA binding complexes with X2BP and CBF/NF-Y. RFX associates with CIITA to form an active transcriptional complex. Interacts with RAF1. Interacts with RFX7. In terms of processing, phosphorylated by RAF1. In terms of tissue distribution, expressed primarily in thymus, lung and testis.

The protein resides in the cytoplasm. It is found in the nucleus. Activates transcription from class II MHC promoters. Activation requires the activity of the MHC class II transactivator/CIITA. May regulate other genes in the cell. RFX binds the X1 box of MHC-II promoters. May also potentiate the activation of RAF1. The chain is DNA-binding protein RFXANK (Rfxank) from Mus musculus (Mouse).